We begin with the raw amino-acid sequence, 292 residues long: Large ribosomal subunit protein bL19m (292 aa).

Residues 40 to 61 (PVRQQSTGPSEPGAFQPPPKPV) are disordered. Residue serine 77 is modified to Phosphoserine.

This sequence belongs to the bacterial ribosomal protein bL19 family. In terms of assembly, component of the mitochondrial ribosome large subunit (39S) which comprises a 16S rRNA and about 50 distinct proteins.

It is found in the mitochondrion. This Pongo abelii (Sumatran orangutan) protein is Large ribosomal subunit protein bL19m (MRPL19).